The chain runs to 484 residues: Ankyrin repeat protein T5 (484 aa).

ANK repeat units lie at residues 33-64 (MDDTPFSLYLTRYDCTLETLRLFLKRGVDVNG), 68-102 (TRTSPLCTVLSNKELGKEAETLAMCLIDAGADVNA), 106-138 (DGRYPLLCLLENDRINTTSFVKYMIDRGTLVCV), 142-173 (DGCGPIQTYLRSKNVVLETLHVLVRAGASIHD), 178-211 (YGFNILQCYMISHVRSSDVRILRFLAGQGVNSSQ), 251-280 (LDFTPINYCVIHNDRRTFDYLLEKGANPNV), and 284-313 (LGNSCLDLAVLNGNKYMTLRLLRKTITPDA).

This is Ankyrin repeat protein T5 from Rabbit fibroma virus (strain Kasza) (RFV).